The primary structure comprises 156 residues: ATP synthase subunit b (156 aa).

Residues leucine 7 to isoleucine 29 form a helical membrane-spanning segment.

Belongs to the ATPase B chain family. As to quaternary structure, F-type ATPases have 2 components, F(1) - the catalytic core - and F(0) - the membrane proton channel. F(1) has five subunits: alpha(3), beta(3), gamma(1), delta(1), epsilon(1). F(0) has three main subunits: a(1), b(2) and c(10-14). The alpha and beta chains form an alternating ring which encloses part of the gamma chain. F(1) is attached to F(0) by a central stalk formed by the gamma and epsilon chains, while a peripheral stalk is formed by the delta and b chains.

It is found in the cell inner membrane. Functionally, f(1)F(0) ATP synthase produces ATP from ADP in the presence of a proton or sodium gradient. F-type ATPases consist of two structural domains, F(1) containing the extramembraneous catalytic core and F(0) containing the membrane proton channel, linked together by a central stalk and a peripheral stalk. During catalysis, ATP synthesis in the catalytic domain of F(1) is coupled via a rotary mechanism of the central stalk subunits to proton translocation. In terms of biological role, component of the F(0) channel, it forms part of the peripheral stalk, linking F(1) to F(0). This is ATP synthase subunit b from Actinobacillus succinogenes (strain ATCC 55618 / DSM 22257 / CCUG 43843 / 130Z).